The following is a 310-amino-acid chain: Tagatose-6-phosphate kinase (310 aa).

The protein belongs to the carbohydrate kinase PfkB family. LacC subfamily.

The catalysed reaction is D-tagatofuranose 6-phosphate + ATP = D-tagatofuranose 1,6-bisphosphate + ADP + H(+). The protein operates within carbohydrate metabolism; D-tagatose 6-phosphate degradation; D-glyceraldehyde 3-phosphate and glycerone phosphate from D-tagatose 6-phosphate: step 1/2. This is Tagatose-6-phosphate kinase from Staphylococcus aureus (strain bovine RF122 / ET3-1).